The sequence spans 86 residues: Large ribosomal subunit protein bL27 (86 aa).

The segment at 1–24 (MAHKKAMGSTENTRDSNPSYLGVK) is disordered. A compositionally biased stretch (polar residues) spans 9 to 19 (STENTRDSNPS).

It belongs to the bacterial ribosomal protein bL27 family.

This is Large ribosomal subunit protein bL27 from Salinibacter ruber (strain DSM 13855 / M31).